The sequence spans 239 residues: Hexuronic acid methyltransferase AglP (239 aa).

Belongs to the FkbM methyltransferase family.

It is found in the cytoplasm. It functions in the pathway cell surface structure biogenesis; S-layer biogenesis. Its function is as follows. Involved in the assembly of a N-linked pentasaccharide that decorates the S-layer glycoprotein and flagellins. S-adenosyl-L-methionine-dependent methyltransferase that modifies the hexuronic acid found at position 4 of the pentasaccharide. This Haloferax volcanii (strain ATCC 29605 / DSM 3757 / JCM 8879 / NBRC 14742 / NCIMB 2012 / VKM B-1768 / DS2) (Halobacterium volcanii) protein is Hexuronic acid methyltransferase AglP (aglP).